Consider the following 135-residue polypeptide: uncharacterized protein (135 aa).

3 helical membrane passes run 12-32, 68-88, and 98-118; these read IPIL…YNGI, SMIG…AKFC, and GILY…FYLF.

The protein localises to the cell membrane. This is an uncharacterized protein from Methanocaldococcus jannaschii (strain ATCC 43067 / DSM 2661 / JAL-1 / JCM 10045 / NBRC 100440) (Methanococcus jannaschii).